The sequence spans 158 residues: Transcription elongation factor GreA (158 aa).

Belongs to the GreA/GreB family.

In terms of biological role, necessary for efficient RNA polymerase transcription elongation past template-encoded arresting sites. The arresting sites in DNA have the property of trapping a certain fraction of elongating RNA polymerases that pass through, resulting in locked ternary complexes. Cleavage of the nascent transcript by cleavage factors such as GreA or GreB allows the resumption of elongation from the new 3'terminus. GreA releases sequences of 2 to 3 nucleotides. The chain is Transcription elongation factor GreA from Baumannia cicadellinicola subsp. Homalodisca coagulata.